Reading from the N-terminus, the 155-residue chain is MIALLQRVTQAQVTVAGEVIARIGPGLVVLVGIERGDGPPQAERLLERLLSYRVFADSKGHMNLSLADVEGALLVVPQFTLAADTGKGTRPSFTPAAPPPLGKQIFEYLFAQAKARYSRCAAGRFGAHMQLSLTNDGPVTFTLQIPPAVQTATTE.

The Gly-cisPro motif, important for rejection of L-amino acids motif lies at 137–138 (GP).

This sequence belongs to the DTD family. As to quaternary structure, homodimer.

It localises to the cytoplasm. The enzyme catalyses glycyl-tRNA(Ala) + H2O = tRNA(Ala) + glycine + H(+). It catalyses the reaction a D-aminoacyl-tRNA + H2O = a tRNA + a D-alpha-amino acid + H(+). Functionally, an aminoacyl-tRNA editing enzyme that deacylates mischarged D-aminoacyl-tRNAs. Also deacylates mischarged glycyl-tRNA(Ala), protecting cells against glycine mischarging by AlaRS. Acts via tRNA-based rather than protein-based catalysis; rejects L-amino acids rather than detecting D-amino acids in the active site. By recycling D-aminoacyl-tRNA to D-amino acids and free tRNA molecules, this enzyme counteracts the toxicity associated with the formation of D-aminoacyl-tRNA entities in vivo and helps enforce protein L-homochirality. This Nitrosococcus oceani (strain ATCC 19707 / BCRC 17464 / JCM 30415 / NCIMB 11848 / C-107) protein is D-aminoacyl-tRNA deacylase.